We begin with the raw amino-acid sequence, 291 residues long: Lipoyl synthase (291 aa).

Residues Cys35, Cys40, Cys46, Cys61, Cys65, Cys68, and Ser273 each coordinate [4Fe-4S] cluster. A Radical SAM core domain is found at 47 to 262 (FGKRQATFLI…KERALTMGFE (216 aa)).

Belongs to the radical SAM superfamily. Lipoyl synthase family. Requires [4Fe-4S] cluster as cofactor.

The protein localises to the cytoplasm. The catalysed reaction is [[Fe-S] cluster scaffold protein carrying a second [4Fe-4S](2+) cluster] + N(6)-octanoyl-L-lysyl-[protein] + 2 oxidized [2Fe-2S]-[ferredoxin] + 2 S-adenosyl-L-methionine + 4 H(+) = [[Fe-S] cluster scaffold protein] + N(6)-[(R)-dihydrolipoyl]-L-lysyl-[protein] + 4 Fe(3+) + 2 hydrogen sulfide + 2 5'-deoxyadenosine + 2 L-methionine + 2 reduced [2Fe-2S]-[ferredoxin]. It participates in protein modification; protein lipoylation via endogenous pathway; protein N(6)-(lipoyl)lysine from octanoyl-[acyl-carrier-protein]: step 2/2. Functionally, catalyzes the radical-mediated insertion of two sulfur atoms into the C-6 and C-8 positions of the octanoyl moiety bound to the lipoyl domains of lipoate-dependent enzymes, thereby converting the octanoylated domains into lipoylated derivatives. This Citrifermentans bemidjiense (strain ATCC BAA-1014 / DSM 16622 / JCM 12645 / Bem) (Geobacter bemidjiensis) protein is Lipoyl synthase.